Here is a 90-residue protein sequence, read N- to C-terminus: Small ribosomal subunit protein uS15 (90 aa).

This sequence belongs to the universal ribosomal protein uS15 family. Part of the 30S ribosomal subunit. Forms a bridge to the 50S subunit in the 70S ribosome, contacting the 23S rRNA.

Its function is as follows. One of the primary rRNA binding proteins, it binds directly to 16S rRNA where it helps nucleate assembly of the platform of the 30S subunit by binding and bridging several RNA helices of the 16S rRNA. In terms of biological role, forms an intersubunit bridge (bridge B4) with the 23S rRNA of the 50S subunit in the ribosome. The sequence is that of Small ribosomal subunit protein uS15 from Wolbachia pipientis subsp. Culex pipiens (strain wPip).